A 201-amino-acid chain; its full sequence is Calcium channel flower (201 aa).

The next 3 helical transmembrane spans lie at Leu37–Ile57, Leu59–Ala79, and Pro103–Phe120.

Belongs to the calcium channel flower family. As to quaternary structure, homomultimer. Associates with the dally/ magu complex.

It is found in the cell membrane. Its subcellular location is the cytoplasmic vesicle. The protein resides in the secretory vesicle. The protein localises to the synaptic vesicle membrane. It localises to the presynaptic cell membrane. It is found in the endosome. Its activity is regulated as follows. Channel activity is inhibited by La(3+), which reduces Ca(2+) influx and thus inhibits it's function in promoting activity-dependent bulk endocytosis (ADBE) in response to high stimuli. Its function is as follows. Transmembrane protein which mediates synaptic endocytosis, fitness-based cell culling, neuronal culling, morphogen gradient scaling, and calcium transport. Regulates synaptic endocytosis and hence couples exo- with endocytosis. Controls two major modes of synaptic vesicle (SV) endocytosis in the synaptic boutons of neuromuscular junctions (NMJs); Ca(2+) channel-independent Clathrin-mediated endocytosis (CME) in response to mild stimulation, and Ca(2+) channel-dependent activity-dependent bulk endocytosis (ADBE) in response to strong stimulation. Functions in ADBE and subsequent SV reformation from bulk endosomes by initiating Ca(2+) channel-dependent phosphatidylinositol 4,5-bisphosphate (PtdIns(4,5)P2) compartmentalization in synaptic boutons. There it acts at the periactive zone to provide the low Ca(2+) levels required to initiate Calcineurin activation and upregulate PtdIns(4,5)P2. Conversely PtdIns(4,5)P2 enhances fwe Ca(2+) channel-activity, establishing a positive feedback loop that induces PtdIns(4,5)P2 microdomain at the periactive zone. These microdomains trigger bulk membrane invagination (i.e. ADBE) by triggering actin polymerization while also promoting localization of fwe to bulk endosomes, thereby removing the ADBE trigger to reduce endocytosis and prevent excess membrane uptake. PtdIns(4,5)P2 then promotes SV reformation from the bulk endosomes, to coordinate ADBE and subsequent SV reformation. Different combinations of the flower isoforms at the cell membrane are also required for the identification and elimination of suboptimal or supernumerary cells during development, regeneration, and adulthood. Required for the recognition and elimination of unfit cells in the developing wing during cell competition. In the developing pupal retina, mediates the elimination of unwanted postmitotic neurons, including supernumerary photoreceptor neurons that form at the periphery of the retina and are contained within incomplete ommatidia units. Also required for efficient elimination and replacement of old neurons by newly generated neurons during regeneration in the adult brain following mechanical injury. Downstream of the flower fitness fingerprints, cells identified as unwanted or unfit are eliminated via apoptosis through the expression of ahuizotl (azot). However, the cells marked for elimination by the flower isoforms only undergo apoptosis if additional thresholds are met; (1) their neighboring fit/healthy cells express different levels of the fwe isoforms, and (2) the levels of the protective signal SPARC expressed by the loser or unwanted cells are unable to inhibit caspase activation. These additional thresholds for flower-mediated apoptosis, allows useful cells to recover from transient and limited stress before they are unnecessarily eliminated. Functions with dally and magu in a mechanism of scaling, which utilises apoptosis to ensure that the dpp morphogen gradient, which mediates organ growth, remains proportional to the size of the growing wing. In this mechanism, fwe represses dally- and Magu-dependent activity in expanding the gradient, and dally/Magu inhibits fwe-dependent apoptosis to keep cell death rate low. When the levels of these different proteins are optimally regulated the gradient correctly scales with organ growth but when this fails, fwe-mediated apoptosis is activated to trim the developing tissue to match the correct size of the gradient. The protein is Calcium channel flower of Drosophila willistoni (Fruit fly).